A 190-amino-acid chain; its full sequence is dITP/XTP pyrophosphatase (190 aa).

Residue 10 to 15 participates in substrate binding; that stretch reads TTNKHK. The Mg(2+) site is built by Glu-39 and Asp-68. Asp-68 serves as the catalytic Proton acceptor. Substrate contacts are provided by residues Ala-69, 143–146, Lys-166, and 171–172; these read FGYD and HR.

This sequence belongs to the HAM1 NTPase family. Homodimer. The cofactor is Mg(2+).

It carries out the reaction XTP + H2O = XMP + diphosphate + H(+). The catalysed reaction is dITP + H2O = dIMP + diphosphate + H(+). It catalyses the reaction ITP + H2O = IMP + diphosphate + H(+). Its function is as follows. Pyrophosphatase that catalyzes the hydrolysis of nucleoside triphosphates to their monophosphate derivatives, with a high preference for the non-canonical purine nucleotides XTP (xanthosine triphosphate), dITP (deoxyinosine triphosphate) and ITP. Seems to function as a house-cleaning enzyme that removes non-canonical purine nucleotides from the nucleotide pool, thus preventing their incorporation into DNA/RNA and avoiding chromosomal lesions. This Hyperthermus butylicus (strain DSM 5456 / JCM 9403 / PLM1-5) protein is dITP/XTP pyrophosphatase.